The sequence spans 389 residues: Succinate--CoA ligase [ADP-forming] subunit beta (389 aa).

The ATP-grasp domain maps to 9-246 (KEILRRHNAN…ITEEDPYEVK (238 aa)). ATP contacts are provided by residues lysine 48, 55 to 57 (GRG), glutamate 101, leucine 104, and glutamate 109. Mg(2+) is bound by residues asparagine 201 and aspartate 215. Residues asparagine 266 and 323–325 (GIV) each bind substrate.

This sequence belongs to the succinate/malate CoA ligase beta subunit family. In terms of assembly, heterotetramer of two alpha and two beta subunits. The cofactor is Mg(2+).

It catalyses the reaction succinate + ATP + CoA = succinyl-CoA + ADP + phosphate. The enzyme catalyses GTP + succinate + CoA = succinyl-CoA + GDP + phosphate. It participates in carbohydrate metabolism; tricarboxylic acid cycle; succinate from succinyl-CoA (ligase route): step 1/1. Succinyl-CoA synthetase functions in the citric acid cycle (TCA), coupling the hydrolysis of succinyl-CoA to the synthesis of either ATP or GTP and thus represents the only step of substrate-level phosphorylation in the TCA. The beta subunit provides nucleotide specificity of the enzyme and binds the substrate succinate, while the binding sites for coenzyme A and phosphate are found in the alpha subunit. The protein is Succinate--CoA ligase [ADP-forming] subunit beta of Leptospira biflexa serovar Patoc (strain Patoc 1 / Ames).